We begin with the raw amino-acid sequence, 159 residues long: Large ribosomal subunit protein uL22c (159 aa).

This sequence belongs to the universal ribosomal protein uL22 family. Part of the 50S ribosomal subunit.

The protein resides in the plastid. It is found in the chloroplast. Its function is as follows. This protein binds specifically to 23S rRNA. The globular domain of the protein is located near the polypeptide exit tunnel on the outside of the subunit, while an extended beta-hairpin is found that lines the wall of the exit tunnel in the center of the 70S ribosome. This Ipomoea purpurea (Common morning glory) protein is Large ribosomal subunit protein uL22c (rpl22).